Here is a 462-residue protein sequence, read N- to C-terminus: N-myc proto-oncogene protein (462 aa).

Residues 19–47 (LEFDSLQPCFYPDEDDFYFGGPDSTPPGE) form an interaction with AURKA region. Residues 61–90 (LSPSRAFPEHSPEPSNWATEMLLPEADLWG) form an interaction with AURKA and FBXW7 region. Residues 76 to 85 (NWATEMLLPE) carry the 9aaTAD motif. Disordered regions lie at residues 134–177 (KLQH…ATLP), 232–289 (AAPA…SSNN), and 332–390 (APSP…LERQ). Low complexity-rich tracts occupy residues 143–176 (GVSS…GATL) and 232–244 (AAPA…PASS). A compositionally biased stretch (acidic residues) spans 257–276 (TLSDSDDEDDEEEDEEEEID). Phosphoserine; by CK2 occurs at positions 259 and 261. In terms of domain architecture, bHLH spans 379–431 (ERRRNHNILERQRRNDLRSSFLTLRDHVPELVKNEKAAKVVILKKATEYVHAL). The interval 431–452 (LQANEHQLLLEKEKLQARQQQL) is leucine-zipper.

As to quaternary structure, efficient DNA binding requires dimerization with another bHLH protein. Binds DNA as a heterodimer with MAX. Interacts with KDM5A, KDM5B and HUWE1. Interacts with MYCNOS. Interacts with AURKA; interaction is phospho-independent and triggers AURKA activation; AURKA competes with FBXW7 for binding to unphosphorylated MYCN but not for binding to unphosphorylated MYCN. Interacts with FBXW7; FBXW7 competes with AURKA for binding to unphosphorylated MYCN but not for binding to phosphorylated MYCN. Phosphorylated by GSK3-beta which may promote its degradation. Phosphorylated by AURKA.

The protein resides in the nucleus. Functionally, positively regulates the transcription of MYCNOS in neuroblastoma cells. This is N-myc proto-oncogene protein (Mycn) from Mus musculus (Mouse).